The sequence spans 250 residues: PF03932 family protein CutC (250 aa).

The protein belongs to the CutC family.

The protein resides in the cytoplasm. This is PF03932 family protein CutC from Vibrio vulnificus (strain CMCP6).